A 386-amino-acid chain; its full sequence is 3-hydroxyisobutyryl-CoA hydrolase, mitochondrial (386 aa).

The N-terminal 32 residues, 1–32 (MGQREMWRLMSRFNAFKRTNTILHHLRMSKHT), are a transit peptide targeting the mitochondrion. N6-acetyllysine; alternate is present on residues Lys55 and Lys92. 2 positions are modified to N6-succinyllysine; alternate: Lys55 and Lys92. Substrate contacts are provided by Glu121, Gly146, Glu169, and Asp177. Lys221 carries the N6-acetyllysine; alternate modification. Residue Lys221 is modified to N6-succinyllysine; alternate. Ser234 carries the post-translational modification Phosphoserine. Lys257 is modified (N6-succinyllysine). Lys297 is subject to N6-acetyllysine; alternate. Lys297 carries the N6-succinyllysine; alternate modification. Lys301 carries the N6-succinyllysine modification. The residue at position 353 (Lys353) is an N6-acetyllysine; alternate. Lys353 bears the N6-succinyllysine; alternate mark. Ser356 is subject to Phosphoserine. 2 positions are modified to N6-acetyllysine: Lys360 and Lys365. An N6-succinyllysine modification is found at Lys377.

It belongs to the enoyl-CoA hydratase/isomerase family. In terms of tissue distribution, highly expressed in liver and kidney, also detected in heart, muscle and brain (at protein level). Not detected in lung.

It is found in the mitochondrion. It carries out the reaction 3-hydroxy-2-methylpropanoyl-CoA + H2O = 3-hydroxy-2-methylpropanoate + CoA + H(+). Its pathway is amino-acid degradation; L-valine degradation. In terms of biological role, hydrolyzes 3-hydroxyisobutyryl-CoA (HIBYL-CoA), a saline catabolite. Has high activity toward isobutyryl-CoA. Could be an isobutyryl-CoA dehydrogenase that functions in valine catabolism. Also hydrolyzes 3-hydroxypropanoyl-CoA. The sequence is that of 3-hydroxyisobutyryl-CoA hydrolase, mitochondrial (HIBCH) from Homo sapiens (Human).